Consider the following 396-residue polypeptide: Maltose/maltodextrin-binding periplasmic protein (396 aa).

Residues 1 to 26 (MKIKTGARILALSALTTMMFSASALA) form the signal peptide.

It belongs to the bacterial solute-binding protein 1 family. In terms of assembly, the complex is composed of two ATP-binding proteins (MalK), two transmembrane proteins (MalG and MalF) and a solute-binding protein (MalE).

It is found in the periplasm. In terms of biological role, part of the ABC transporter complex MalEFGK involved in maltose/maltodextrin import. Binds maltose and higher maltodextrins. In Klebsiella aerogenes (Enterobacter aerogenes), this protein is Maltose/maltodextrin-binding periplasmic protein (malE).